Here is a 444-residue protein sequence, read N- to C-terminus: tRNA-2-methylthio-N(6)-dimethylallyladenosine synthase (444 aa).

Positions 7–121 (KTFHVKSFGC…LPELIARAER (115 aa)) constitute an MTTase N-terminal domain. Positions 16, 52, 84, 158, 162, and 165 each coordinate [4Fe-4S] cluster. The 233-residue stretch at 144-376 (GNQRPTAFLT…QALLNEQQQA (233 aa)) folds into the Radical SAM core domain. The TRAM domain occupies 379–441 (EATVGRTTRL…PNSLGAEPLM (63 aa)).

It belongs to the methylthiotransferase family. MiaB subfamily. Monomer. It depends on [4Fe-4S] cluster as a cofactor.

The protein resides in the cytoplasm. It catalyses the reaction N(6)-dimethylallyladenosine(37) in tRNA + (sulfur carrier)-SH + AH2 + 2 S-adenosyl-L-methionine = 2-methylsulfanyl-N(6)-dimethylallyladenosine(37) in tRNA + (sulfur carrier)-H + 5'-deoxyadenosine + L-methionine + A + S-adenosyl-L-homocysteine + 2 H(+). Functionally, catalyzes the methylthiolation of N6-(dimethylallyl)adenosine (i(6)A), leading to the formation of 2-methylthio-N6-(dimethylallyl)adenosine (ms(2)i(6)A) at position 37 in tRNAs that read codons beginning with uridine. This Sphingopyxis alaskensis (strain DSM 13593 / LMG 18877 / RB2256) (Sphingomonas alaskensis) protein is tRNA-2-methylthio-N(6)-dimethylallyladenosine synthase.